The following is a 455-amino-acid chain: Outer capsid protein sigma-1 (455 aa).

Residues 1 to 307 (MDPRLREEVV…YPIADVSGGI (307 aa)) are tail. Residues 116 to 148 (LAELRVDHDNLVARVDTAERNIGSLTTELSTLT) adopt a coiled-coil conformation. 3 N-linked (GlcNAc...) asparagine; by host glycosylation sites follow: Asn231, Asn264, and Asn282. The tract at residues 308–455 (GMSPNYRFRQ…MTVSYPRSFT (148 aa)) is head.

The protein belongs to the orthoreovirus sigma-1 protein family. As to quaternary structure, homotrimer. Interacts (via the head region) with human F11R. Undergoes dramatic conformational rearrangements during viral disassembly in the endocytic pathway.

It is found in the virion. Its function is as follows. Fiber-like molecule that attaches the virion to the host cell membrane by binding to the primary receptor F11R/JAM-A and to sialic acid containing proteins (coreceptor). The interaction of sigma-1 with F11R is required for NF-kB activation and apoptosis. Binding to both sialic acid and F11R is required to induce maximal levels of apoptosis. This is Outer capsid protein sigma-1 (S1) from Reovirus type 3 (strain Dearing) (T3D).